We begin with the raw amino-acid sequence, 381 residues long: Alkanesulfonate monooxygenase (381 aa).

It belongs to the SsuD family. In terms of assembly, homotetramer.

It carries out the reaction an alkanesulfonate + FMNH2 + O2 = an aldehyde + FMN + sulfite + H2O + 2 H(+). Catalyzes the desulfonation of aliphatic sulfonates. The protein is Alkanesulfonate monooxygenase of Cronobacter sakazakii (strain ATCC BAA-894) (Enterobacter sakazakii).